Consider the following 175-residue polypeptide: Peptide methionine sulfoxide reductase MsrA (175 aa).

The active site involves Cys12.

It belongs to the MsrA Met sulfoxide reductase family.

The catalysed reaction is L-methionyl-[protein] + [thioredoxin]-disulfide + H2O = L-methionyl-(S)-S-oxide-[protein] + [thioredoxin]-dithiol. It catalyses the reaction [thioredoxin]-disulfide + L-methionine + H2O = L-methionine (S)-S-oxide + [thioredoxin]-dithiol. In terms of biological role, has an important function as a repair enzyme for proteins that have been inactivated by oxidation. Catalyzes the reversible oxidation-reduction of methionine sulfoxide in proteins to methionine. This Limosilactobacillus reuteri (strain DSM 20016) (Lactobacillus reuteri) protein is Peptide methionine sulfoxide reductase MsrA.